We begin with the raw amino-acid sequence, 1009 residues long: Cilia- and flagella-associated protein 70 (1009 aa).

Positions 410 to 428 (NLKEDKPVKEKDIDGRPRP) are enriched in basic and acidic residues. Residues 410-457 (NLKEDKPVKEKDIDGRPRPGDVQAPSIKSQSSDTPLEGEPPLSHNPEG) are disordered. 7 TPR repeats span residues 498–531 (PPLT…EYYR), 635–668 (SEQL…EPQN), 669–702 (LDHW…NQSH), 704–736 (HSLL…EPTN), 888–921 (HFIF…SPSC), 923–954 (TWLG…NNYN), and 956–988 (EVWA…KLKD).

This sequence belongs to the CFAP70 family.

The protein localises to the cell projection. The protein resides in the cilium. It localises to the flagellum. It is found in the cytoplasm. Its subcellular location is the cytoskeleton. The protein localises to the flagellum basal body. The protein resides in the cilium axoneme. Its function is as follows. Axoneme-binding protein that plays a role in the regulation of ciliary motility and cilium length. This is Cilia- and flagella-associated protein 70 from Macaca fascicularis (Crab-eating macaque).